A 391-amino-acid chain; its full sequence is Nutrient and stress factor 1 (391 aa).

A compositionally biased stretch (polar residues) spans 1–27 (MENTTNRNTAGVLTSSNGNFATNSVAA). The interval 1–37 (MENTTNRNTAGVLTSSNGNFATNSVAASTPKRSKSAR) is disordered. 2 C2H2-type zinc fingers span residues 41 to 66 (FKCT…IRKH) and 72 to 95 (FQCP…ESVH). The segment at 91-149 (RESVHAHKNHHSTSSHQRKPSSSSLSSSSSASSSSSASSSTSYSDPYRKTNINSGNMPM) is disordered. Over residues 96–109 (AHKNHHSTSSHQRK) the composition is skewed to basic residues. Over residues 110–134 (PSSSSLSSSSSASSSSSASSSTSYS) the composition is skewed to low complexity. Phosphoserine is present on residues Ser162 and Ser163. Residues 326–374 (AFSQPPNGNKNNNMSSSKNGGKGGENFKNTDDRNDNNNKKRSETLSESD) are disordered. Residues 332–344 (NGNKNNNMSSSKN) show a composition bias toward low complexity. Positions 353–369 (KNTDDRNDNNNKKRSET) are enriched in basic and acidic residues.

The protein localises to the nucleus. In terms of biological role, transcription factor that participates in the transcriptional activation of glucose-repressed genes during exponential growth in non-fermentable carbon conditions. Also involved in salt-stress response. The polypeptide is Nutrient and stress factor 1 (USV1) (Saccharomyces cerevisiae (strain ATCC 204508 / S288c) (Baker's yeast)).